The sequence spans 160 residues: Serine-protein kinase RsbW (160 aa).

The protein belongs to the anti-sigma-factor family.

It catalyses the reaction L-seryl-[protein] + ATP = O-phospho-L-seryl-[protein] + ADP + H(+). The enzyme catalyses L-threonyl-[protein] + ATP = O-phospho-L-threonyl-[protein] + ADP + H(+). Functionally, negative regulator of sigma-B activity. Phosphorylates and inactivates its specific antagonist protein, RsbV. Upon phosphorylation of RsbV, RsbW is released and binds to sigma-B, thereby blocking its ability to form an RNA polymerase holoenzyme (E-sigma-B). The sequence is that of Serine-protein kinase RsbW from Bacillus mycoides (strain KBAB4) (Bacillus weihenstephanensis).